The chain runs to 392 residues: GTPase Obg (392 aa).

One can recognise an Obg domain in the interval 1–159; that stretch reads MKFIDEALIR…RDLQLELMLL (159 aa). The OBG-type G domain occupies 160–333; the sequence is ADVGMLGLPN…LCRDIMDFIE (174 aa). GTP-binding positions include 166 to 173, 191 to 195, 213 to 216, 283 to 286, and 314 to 316; these read GLPNAGKS, FTTLV, DIPG, NKID, and SAA. Mg(2+) contacts are provided by Ser173 and Thr193. Residues 362–392 form a disordered region; sequence EQVFTEDDQEGDDWDDWSEDDEEGVEIIYKP. A compositionally biased stretch (acidic residues) spans 365-386; the sequence is FTEDDQEGDDWDDWSEDDEEGV.

It belongs to the TRAFAC class OBG-HflX-like GTPase superfamily. OBG GTPase family. In terms of assembly, monomer. Mg(2+) serves as cofactor.

The protein localises to the cytoplasm. In terms of biological role, an essential GTPase which binds GTP, GDP and possibly (p)ppGpp with moderate affinity, with high nucleotide exchange rates and a fairly low GTP hydrolysis rate. Plays a role in control of the cell cycle, stress response, ribosome biogenesis and in those bacteria that undergo differentiation, in morphogenesis control. In Histophilus somni (strain 129Pt) (Haemophilus somnus), this protein is GTPase Obg.